Reading from the N-terminus, the 331-residue chain is Sucrose operon repressor (331 aa).

The 56-residue stretch at 1–56 (MASLKDVARLAGVSMMTVSRVMHNAESVRPATRDRVLQAIQTLNYVPDLSARKMRA) folds into the HTH lacI-type domain. A DNA-binding region (H-T-H motif) is located at residues 4-23 (LKDVARLAGVSMMTVSRVMH).

Functionally, repressor for the csc operon. Binds D-fructose as an inducer. The sequence is that of Sucrose operon repressor (cscR) from Escherichia coli.